Here is a 787-residue protein sequence, read N- to C-terminus: Phenylalanine--tRNA ligase beta subunit (787 aa).

One can recognise a tRNA-binding domain in the interval 39–149; that stretch reads APAFAGVVIA…EDAPVGTNIR (111 aa). A B5 domain is found at 400–475; it reads PEAKQVGLRL…RVYGYENIPD (76 aa). Residues aspartate 453, aspartate 459, glutamate 462, and glutamate 463 each coordinate Mg(2+). Residues 694–786 form the FDX-ACB domain; it reads SKFQPVRRDL…AATAAGARLR (93 aa).

It belongs to the phenylalanyl-tRNA synthetase beta subunit family. Type 1 subfamily. As to quaternary structure, tetramer of two alpha and two beta subunits. It depends on Mg(2+) as a cofactor.

It localises to the cytoplasm. It catalyses the reaction tRNA(Phe) + L-phenylalanine + ATP = L-phenylalanyl-tRNA(Phe) + AMP + diphosphate + H(+). The protein is Phenylalanine--tRNA ligase beta subunit (pheT) of Neisseria meningitidis serogroup B (strain ATCC BAA-335 / MC58).